We begin with the raw amino-acid sequence, 687 residues long: Glycine--tRNA ligase beta subunit (687 aa).

Belongs to the class-II aminoacyl-tRNA synthetase family. In terms of assembly, tetramer of two alpha and two beta subunits.

Its subcellular location is the cytoplasm. The enzyme catalyses tRNA(Gly) + glycine + ATP = glycyl-tRNA(Gly) + AMP + diphosphate. This chain is Glycine--tRNA ligase beta subunit, found in Neisseria meningitidis serogroup C (strain 053442).